A 417-amino-acid polypeptide reads, in one-letter code: MRIIVLGAGVIGVTSAYFLAKAGHEVTVLDRQAGPALETSYANAGEVSPGYSSPWAAPGIPMKAAKWLFMKHAPLIVRPTLDPVTWRWMLQMLANCTSARYAVNKGRMVRIAEYSRDVLMQLRADTGIRYDERMQGTLEVFRSQKQLDGIAKDIAVLKADGVPFEVLDREGCVQVEPGLKPAAHKIVGGLRLPGDETGDCFLFTNALAKLAEGLGVRFVYNVDLKRLRRDGDRIAAVETAQGDYIADSYVAALGSYMPGFLAPLGLDLPIYPVKGYSITVPILDEAKAPVSTVMDEYYKIAITRLGSRIRVGGMAEIARFNKDLPPARQATLTLSVEDLFGGAGDQKKAEFWCGLRPMTPDGTPIIGKTKFGNLFLNGGHGTLGWTMSCGSARLLSDIISGAKPEISTEGLDLSRYR.

FAD is bound at residue 3–17 (IIVLGAGVIGVTSAY).

It belongs to the DadA oxidoreductase family. FAD serves as cofactor.

It catalyses the reaction a D-alpha-amino acid + A + H2O = a 2-oxocarboxylate + AH2 + NH4(+). The protein operates within amino-acid degradation; D-alanine degradation; NH(3) and pyruvate from D-alanine: step 1/1. Its function is as follows. Oxidative deamination of D-amino acids. The sequence is that of D-amino acid dehydrogenase from Azorhizobium caulinodans (strain ATCC 43989 / DSM 5975 / JCM 20966 / LMG 6465 / NBRC 14845 / NCIMB 13405 / ORS 571).